The following is a 103-amino-acid chain: Large ribosomal subunit protein bL21 (103 aa).

This sequence belongs to the bacterial ribosomal protein bL21 family. In terms of assembly, part of the 50S ribosomal subunit. Contacts protein L20.

In terms of biological role, this protein binds to 23S rRNA in the presence of protein L20. The polypeptide is Large ribosomal subunit protein bL21 (Psychrobacter sp. (strain PRwf-1)).